The sequence spans 2301 residues: Genome polyprotein (2301 aa).

A zinc finger lies at 3 to 14; it reads CKHGYPDVCPIC. The tract at residues 30–46 is acidic; it reads DGEWFPTDLLCVDLDDD. The interval 60–73 is theilo; that stretch reads MEWTDLPLVRDIVM. The N-myristoyl glycine; by host moiety is linked to residue Gly-77. The cysteines at positions 501 and 503 are disulfide-linked. Positions 1039–1045 are host EIF4E binding; the sequence is YYKQRLI. One can recognise an SF3 helicase domain in the interval 1281–1446; sequence IPLASLCEKF…CTTSNGMLDI (166 aa). Residue 1310–1317 coordinates ATP; it reads GAAGQGKS. Position 1606 is an O-(5'-phospho-RNA)-tyrosine (Tyr-1606). The Peptidase C3 domain occupies 1634–1827; that stretch reads NPVMDFELFC…AATIITRELI (194 aa). Catalysis depends on for protease 3C activity residues His-1678, Asp-1712, and Cys-1791. Residues 2069 to 2187 form the RdRp catalytic domain; it reads NYVYDVDYSN…GTNYQIDFNL (119 aa). Residues Asp-2075 and Asp-2173 each act as for RdRp activity in the active site.

This sequence belongs to the picornaviruses polyprotein family. As to quaternary structure, interacts with host EIF4E. Interacts with the leader protein. In terms of assembly, interacts with host RAN; the complex L-RAN recruits cellular kinases responsible for the L-induced nucleocytoplasmic trafficking inhibition. The complex L-RAN can further bind to the host exportins XPO1/CRM1 and CSE1L/CAS. Interacts with the protein 2A. Interacts with host RNASEL; this interaction prevents RNASEL activation by its substrate 2'-5' oligoadenylates. Post-translationally, phosphorylated. Specific enzymatic cleavages by the viral protease in vivo yield a variety of precursors and mature proteins. The polyprotein seems to be cotranslationally cleaved at the 2A/2B junction by a ribosomal skip from one codon to the next without formation of a peptide bond. This process would release the P1-2A peptide from the translational complex. In terms of processing, during virion maturation, immature virions are rendered infectious following cleavage of VP0 into VP4 and VP2. This maturation seems to be an autocatalytic event triggered by the presence of RNA in the capsid and is followed by a conformational change of the particle. Post-translationally, uridylylated by the polymerase and is covalently linked to the 5'-end of genomic RNA. This uridylylated form acts as a nucleotide-peptide primer for the polymerase. Myristoylation is required during RNA encapsidation and formation of the mature virus particle.

The protein resides in the virion. Its subcellular location is the host cytoplasm. The protein localises to the host nucleus. It is found in the host nucleolus. It localises to the host cytoplasmic vesicle membrane. It carries out the reaction RNA(n) + a ribonucleoside 5'-triphosphate = RNA(n+1) + diphosphate. The catalysed reaction is ATP + H2O = ADP + phosphate + H(+). The enzyme catalyses Selective cleavage of Gln-|-Gly bond in the poliovirus polyprotein. In other picornavirus reactions Glu may be substituted for Gln, and Ser or Thr for Gly.. Functionally, forms a complex with host RAN and probably binds to exportins carrying activated MAPK in order to mediate the hyperphosphorylation of host Phe/Gly containing nuclear pore proteins (Nups) resulting in cessation of active nucleocytoplasmic transport. Proteins with NLS signals fail to import, cellular mRNAs fail to export, and some proteins small enough for diffusion are not retained anymore (efflux). The resulting inhibition of cellular protein synthesis serves to ensure maximal viral gene expression and to evade host immune response. The leader protein also inhibits host interferon regulatory factor 3 (IRF3) dimerization, thereby blocking the transcriptional activation of IFN genes. Binds to host RNase L thereby preventing its activation by 2'-5' oligoadenylates in order to counteract the antiviral interferon-inducible OAS/RNase L pathway. In terms of biological role, forms an icosahedral capsid of pseudo T=3 symmetry with capsid proteins VP2 and VP3. Together they form an icosahedral capsid composed of 60 copies of each VP1, VP2, and VP3, with a diameter of approximately 300 Angstroms. VP4 lies on the inner surface of the protein shell formed by VP1, VP2 and VP3. All the three latter proteins contain a beta-sheet structure called beta-barrel jelly roll. VP1 is situated at the 12 fivefold axes, whereas VP2 and VP3 are located at the quasi-sixfold axes. Lies on the inner surface of the capsid shell. After binding to the host receptor, the capsid undergoes conformational changes. Capsid protein VP4 is released, capsid protein VP1 N-terminus is externalized, and together, they shape a pore in the host membrane through which the viral genome is translocated into the host cell cytoplasm. After genome has been released, the channel shrinks. Its function is as follows. VP0 precursor is a component of immature procapsids. Functionally, involved in host translation shutoff by inhibiting cap-dependent mRNA translation. Nuclear localization is required for this function. The resulting inhibition of cellular protein synthesis serves to ensure maximal viral gene expression and to evade host immune response. Inhibits the phosphorylation of the leader protein. In terms of biological role, affects membrane integrity and causes an increase in membrane permeability. Associates with and induces structural rearrangements of intracellular membranes. It displays RNA-binding, nucleotide binding and NTPase activities. Its function is as follows. Serves as membrane anchor via its hydrophobic domain. Functionally, forms a primer, VPg-pU, which is utilized by the polymerase for the initiation of RNA chains. In terms of biological role, cysteine protease that generates mature viral proteins from the precursor polyprotein. In addition to its proteolytic activity, it binds to viral RNA, and thus influences viral genome replication. RNA and substrate cooperatively bind to the protease. Cleaves host PABP1, this cleavage is important for viral replication. Replicates the genomic and antigenomic RNAs by recognizing replications specific signals. Performs VPg uridylylation. This chain is Genome polyprotein, found in Theiler's murine encephalomyelitis virus (strain DA) (TMEV).